A 931-amino-acid chain; its full sequence is Phosphoenolpyruvate carboxylase (931 aa).

Catalysis depends on residues His-138 and Lys-594.

This sequence belongs to the PEPCase type 1 family. Mg(2+) is required as a cofactor.

It carries out the reaction oxaloacetate + phosphate = phosphoenolpyruvate + hydrogencarbonate. Forms oxaloacetate, a four-carbon dicarboxylic acid source for the tricarboxylic acid cycle. This Streptococcus agalactiae serotype Ia (strain ATCC 27591 / A909 / CDC SS700) protein is Phosphoenolpyruvate carboxylase.